Here is a 219-residue protein sequence, read N- to C-terminus: GTP cyclohydrolase-2 (219 aa).

51–55 (RIHSE) provides a ligand contact to GTP. Residues C56, C67, and C69 each contribute to the Zn(2+) site. Residues Q72, 94 to 96 (EGR), and T116 each bind GTP. D128 (proton acceptor) is an active-site residue. The Nucleophile role is filled by R130. GTP is bound by residues T151 and K156.

The protein belongs to the GTP cyclohydrolase II family. Requires Zn(2+) as cofactor.

It carries out the reaction GTP + 4 H2O = 2,5-diamino-6-hydroxy-4-(5-phosphoribosylamino)-pyrimidine + formate + 2 phosphate + 3 H(+). It participates in cofactor biosynthesis; riboflavin biosynthesis; 5-amino-6-(D-ribitylamino)uracil from GTP: step 1/4. Functionally, catalyzes the conversion of GTP to 2,5-diamino-6-ribosylamino-4(3H)-pyrimidinone 5'-phosphate (DARP), formate and pyrophosphate. The protein is GTP cyclohydrolase-2 of Pasteurella multocida (strain Pm70).